A 439-amino-acid chain; its full sequence is GTPase Der (439 aa).

EngA-type G domains follow at residues 4 to 168 (PIVA…KDDE) and 177 to 352 (INIA…DNYT). GTP contacts are provided by residues 10–17 (GRPNVGKS), 57–61 (DTGGI), 120–123 (NKID), 183–190 (GKPNVGKS), 230–234 (DTAGL), and 295–298 (NKWD). Residues 353–437 (KRVKTGVLND…GIKTEFRERK (85 aa)) form the KH-like domain.

It belongs to the TRAFAC class TrmE-Era-EngA-EngB-Septin-like GTPase superfamily. EngA (Der) GTPase family. In terms of assembly, associates with the 50S ribosomal subunit.

Functionally, GTPase that plays an essential role in the late steps of ribosome biogenesis. The sequence is that of GTPase Der from Clostridium botulinum (strain Loch Maree / Type A3).